A 346-amino-acid chain; its full sequence is Probable RNA methyltransferase PA1839 (346 aa).

Glu91 serves as the catalytic Proton acceptor. One can recognise a Radical SAM core domain in the interval 94-320 (LLPRGGLCVS…TKVRNSAGQD (227 aa)). A disulfide bond links Cys101 and Cys325. Residues Cys108, Cys112, and Cys115 each coordinate [4Fe-4S] cluster. S-adenosyl-L-methionine contacts are provided by residues 153–154 (GE), Ser183, 206–208 (SLH), and Asn282. Catalysis depends on Cys325, which acts as the S-methylcysteine intermediate.

Belongs to the radical SAM superfamily. RlmN family. It depends on [4Fe-4S] cluster as a cofactor.

Its subcellular location is the cytoplasm. This Pseudomonas aeruginosa (strain ATCC 15692 / DSM 22644 / CIP 104116 / JCM 14847 / LMG 12228 / 1C / PRS 101 / PAO1) protein is Probable RNA methyltransferase PA1839.